Here is a 319-residue protein sequence, read N- to C-terminus: Taste receptor type 2 member 39 (319 aa).

At 1–16 (MAQPSNYWKQDLLPLS) the chain is on the extracellular side. Residues 17–37 (ILILTLVATECTIGIIASGII) form a helical membrane-spanning segment. Residues 38–56 (TVVNAVSWVQKRAVSITTR) are Cytoplasmic-facing. Residues 57–77 (ILLLLSVSRIGLQSIILIEMT) form a helical membrane-spanning segment. The Extracellular portion of the chain corresponds to 78-97 (SSIFNFSSYNSVLYRVSRVS). Asparagine 82 carries N-linked (GlcNAc...) asparagine glycosylation. A helical transmembrane segment spans residues 98-118 (FVFLNYCSLWFAALLSFFHFV). Residues 119-137 (KIANFSYPLFFKLKWRISE) lie on the Cytoplasmic side of the membrane. The chain crosses the membrane as a helical span at residues 138-158 (LMPWLLWLSVFISFSSSMFFC). Topologically, residues 159–187 (NHKYTVYNNISLSSNICNFTMELYVAEAN) are extracellular. Asparagine 167 and asparagine 176 each carry an N-linked (GlcNAc...) asparagine glycan. Residues 188 to 208 (VVNVAFLFSFGILPPLTMFIA) form a helical membrane-spanning segment. At 209-247 (TATLLIFSLRRHTLHMRNGDADSRNPRVEAHKQAIKETS) the chain is on the cytoplasmic side. The helical transmembrane segment at 248–268 (CFLFLYILYAAVLFLSTSNIA) threads the bilayer. Over 269–273 (DASLF) the chain is Extracellular. Residues 274–294 (WSSVLRISLPVYPAGHSVLLI) form a helical membrane-spanning segment. Over 295–319 (QSNPGLKRTWKQLLSQIHLHLQSRY) the chain is Cytoplasmic.

It belongs to the G-protein coupled receptor T2R family.

The protein resides in the membrane. Its function is as follows. Putative taste receptor which may play a role in the perception of bitterness. The sequence is that of Taste receptor type 2 member 39 from Rattus norvegicus (Rat).